The sequence spans 89 residues: Cell division topological specificity factor (89 aa).

Belongs to the MinE family.

Its function is as follows. Prevents the cell division inhibition by proteins MinC and MinD at internal division sites while permitting inhibition at polar sites. This ensures cell division at the proper site by restricting the formation of a division septum at the midpoint of the long axis of the cell. This Desulforudis audaxviator (strain MP104C) protein is Cell division topological specificity factor.